The following is a 207-amino-acid chain: Large ribosomal subunit protein uL4 (207 aa).

The disordered stretch occupies residues 45–78; sequence RQGTHKTKNRAEVSGGGRKPWRQKGTGRARQGSI.

Belongs to the universal ribosomal protein uL4 family. As to quaternary structure, part of the 50S ribosomal subunit.

Functionally, one of the primary rRNA binding proteins, this protein initially binds near the 5'-end of the 23S rRNA. It is important during the early stages of 50S assembly. It makes multiple contacts with different domains of the 23S rRNA in the assembled 50S subunit and ribosome. Forms part of the polypeptide exit tunnel. In Geobacillus sp. (strain WCH70), this protein is Large ribosomal subunit protein uL4.